We begin with the raw amino-acid sequence, 402 residues long: uncharacterized protein (402 aa).

12 helical membrane passes run Ile-23–Val-43, Leu-52–Leu-72, Val-90–Ile-110, Leu-121–Gly-141, Trp-158–Val-178, Trp-180–Leu-200, Gly-228–Tyr-248, Ala-255–Phe-275, Leu-282–Leu-302, Trp-309–Phe-329, Leu-351–Phe-371, and Ser-375–His-395.

Belongs to the major facilitator superfamily. YhhS family.

The protein localises to the cell inner membrane. This is an uncharacterized protein from Pseudomonas aeruginosa (strain ATCC 15692 / DSM 22644 / CIP 104116 / JCM 14847 / LMG 12228 / 1C / PRS 101 / PAO1).